A 319-amino-acid polypeptide reads, in one-letter code: Beta-ketoacyl-[acyl-carrier-protein] synthase III (319 aa).

Active-site residues include C112 and H246. The ACP-binding stretch occupies residues 247–251 (QANKR). N276 is an active-site residue.

This sequence belongs to the thiolase-like superfamily. FabH family. Homodimer.

The protein resides in the cytoplasm. It carries out the reaction malonyl-[ACP] + acetyl-CoA + H(+) = 3-oxobutanoyl-[ACP] + CO2 + CoA. The protein operates within lipid metabolism; fatty acid biosynthesis. Functionally, catalyzes the condensation reaction of fatty acid synthesis by the addition to an acyl acceptor of two carbons from malonyl-ACP. Catalyzes the first condensation reaction which initiates fatty acid synthesis and may therefore play a role in governing the total rate of fatty acid production. Possesses both acetoacetyl-ACP synthase and acetyl transacylase activities. Its substrate specificity determines the biosynthesis of branched-chain and/or straight-chain of fatty acids. This chain is Beta-ketoacyl-[acyl-carrier-protein] synthase III, found in Psychromonas ingrahamii (strain DSM 17664 / CCUG 51855 / 37).